We begin with the raw amino-acid sequence, 82 residues long: ATP synthase subunit c (82 aa).

A run of 2 helical transmembrane segments spans residues 7-27 and 57-77; these read AASVVAAGLAVGLGAIGPGIG and FAFMESLTIYGLVVALVLLFA.

Belongs to the ATPase C chain family. In terms of assembly, F-type ATPases have 2 components, F(1) - the catalytic core - and F(0) - the membrane proton channel. F(1) has five subunits: alpha(3), beta(3), gamma(1), delta(1), epsilon(1). F(0) has four main subunits: a(1), b(1), b'(1) and c(10-14). The alpha and beta chains form an alternating ring which encloses part of the gamma chain. F(1) is attached to F(0) by a central stalk formed by the gamma and epsilon chains, while a peripheral stalk is formed by the delta, b and b' chains.

The protein resides in the cellular thylakoid membrane. F(1)F(0) ATP synthase produces ATP from ADP in the presence of a proton or sodium gradient. F-type ATPases consist of two structural domains, F(1) containing the extramembraneous catalytic core and F(0) containing the membrane proton channel, linked together by a central stalk and a peripheral stalk. During catalysis, ATP synthesis in the catalytic domain of F(1) is coupled via a rotary mechanism of the central stalk subunits to proton translocation. In terms of biological role, key component of the F(0) channel; it plays a direct role in translocation across the membrane. A homomeric c-ring of between 10-14 subunits forms the central stalk rotor element with the F(1) delta and epsilon subunits. This Prochlorococcus marinus (strain MIT 9303) protein is ATP synthase subunit c.